Reading from the N-terminus, the 120-residue chain is Immunoglobulin kappa variable 2-30 (120 aa).

An N-terminal signal peptide occupies residues 1–20; sequence MRLPAQLLGLLMLWVPGSSG. Positions 21 to 43 are framework-1; sequence DVVMTQSPLSLPVTLGQPASISC. One can recognise an Ig-like domain in the interval 21-120; that stretch reads DVVMTQSPLS…YYCMQGTHWP (100 aa). C43 and C113 are oxidised to a cystine. Positions 44 to 59 are complementarity-determining-1; it reads RSSQSLVYSDGNTYLN. A framework-2 region spans residues 60–74; that stretch reads WFQQRPGQSPRRLIY. A complementarity-determining-2 region spans residues 75 to 81; it reads KVSNRDS. Residues 82–113 form a framework-3 region; the sequence is GVPDRFSGSGSGTDFTLKISRVEAEDVGVYYC. Positions 114 to 120 are complementarity-determining-3; that stretch reads MQGTHWP.

Immunoglobulins are composed of two identical heavy chains and two identical light chains; disulfide-linked.

It is found in the secreted. The protein resides in the cell membrane. V region of the variable domain of immunoglobulin light chains that participates in the antigen recognition. Immunoglobulins, also known as antibodies, are membrane-bound or secreted glycoproteins produced by B lymphocytes. In the recognition phase of humoral immunity, the membrane-bound immunoglobulins serve as receptors which, upon binding of a specific antigen, trigger the clonal expansion and differentiation of B lymphocytes into immunoglobulins-secreting plasma cells. Secreted immunoglobulins mediate the effector phase of humoral immunity, which results in the elimination of bound antigens. The antigen binding site is formed by the variable domain of one heavy chain, together with that of its associated light chain. Thus, each immunoglobulin has two antigen binding sites with remarkable affinity for a particular antigen. The variable domains are assembled by a process called V-(D)-J rearrangement and can then be subjected to somatic hypermutations which, after exposure to antigen and selection, allow affinity maturation for a particular antigen. The protein is Immunoglobulin kappa variable 2-30 of Homo sapiens (Human).